The following is a 483-amino-acid chain: Cysteine proteinase 1, mitochondrial (483 aa).

A mitochondrion-targeting transit peptide spans 1 to 30 (MLPTSVSWSLYLKTFRSHLLRAPQIVLKRM). Active-site residues include cysteine 102, histidine 398, and asparagine 421. Residue lysine 483 is a propeptide, removed in mature form; by autocatalysis.

The protein belongs to the peptidase C1 family. As to quaternary structure, homohexamer. Binds to nucleic acids. Binds single-stranded DNA and RNA with higher affinity than double-stranded DNA. The N-terminus of isoform Cytoplasmic is blocked.

The protein localises to the mitochondrion. It localises to the cytoplasm. It carries out the reaction Inactivates bleomycin B2 (a cytotoxic glycometallopeptide) by hydrolysis of a carboxyamide bond of beta-aminoalanine, but also shows general aminopeptidase activity. The specificity varies somewhat with source, but amino acid arylamides of Met, Leu and Ala are preferred.. With respect to regulation, inhibited by E64, a specific inhibitor of cysteine proteases, N-ethylmaleimide, iodacetamide, and mercury and zinc ions. Functionally, the normal physiological role of the enzyme is unknown, but it is not essential for the viability of yeast cells. Has aminopeptidase activity, shortening substrate peptides sequentially by 1 amino acid. Has bleomycin hydrolase activity, which can protect the cell from the toxic effects of bleomycin. Has homocysteine-thiolactonase activity, protecting the cell against homocysteine toxicity. Acts as a repressor in the GAL4 regulatory system, but this does not require either the peptidase or nucleic acid-binding activities. The chain is Cysteine proteinase 1, mitochondrial (LAP3) from Saccharomyces cerevisiae (strain YJM789) (Baker's yeast).